The sequence spans 459 residues: N-chimaerin (459 aa).

A2 bears the N-acetylalanine mark. The SH2 domain maps to 49–135 (EFHGMISREA…IETKAAEYIA (87 aa)). At T192 the chain carries Phosphothreonine. The Phorbol-ester/DAG-type zinc finger occupies 205-255 (IHNFKVHTFRGPHWCEYCANFMWGLIAQGVKCADCGLNVHKQCSKMVPNDC). The 192-residue stretch at 268–459 (CDLTTLVKAH…LLIKNEDILF (192 aa)) folds into the Rho-GAP domain. T340 is subject to Phosphothreonine.

As to quaternary structure, interacts with EPHA4; effector of EPHA4 in axon guidance linking EPHA4 activation to RAC1 regulation. In terms of processing, phosphorylated. Phosphorylation is EPHA4 kinase activity-dependent. As to expression, in neurons in brain regions that are involved in learning and memory processes.

Functionally, GTPase-activating protein for p21-rac and a phorbol ester receptor. Involved in the assembly of neuronal locomotor circuits as a direct effector of EPHA4 in axon guidance. The chain is N-chimaerin (CHN1) from Homo sapiens (Human).